Consider the following 333-residue polypeptide: Holliday junction branch migration complex subunit RuvB (333 aa).

Residues 1–182 (MDERLLSGES…FGVLSRLEYY (182 aa)) form a large ATPase domain (RuvB-L) region. Residues Leu21, Arg22, Gly63, Lys66, Thr67, Thr68, 129–131 (EDF), Arg172, Tyr182, and Arg219 contribute to the ATP site. Thr67 is a binding site for Mg(2+). The interval 183–253 (TVDQLSAIVE…ITQMALELLQ (71 aa)) is small ATPAse domain (RuvB-S). A head domain (RuvB-H) region spans residues 256-333 (KLGLDHIDHK…EHFGMEIPKV (78 aa)). DNA contacts are provided by Arg311 and Arg316.

This sequence belongs to the RuvB family. Homohexamer. Forms an RuvA(8)-RuvB(12)-Holliday junction (HJ) complex. HJ DNA is sandwiched between 2 RuvA tetramers; dsDNA enters through RuvA and exits via RuvB. An RuvB hexamer assembles on each DNA strand where it exits the tetramer. Each RuvB hexamer is contacted by two RuvA subunits (via domain III) on 2 adjacent RuvB subunits; this complex drives branch migration. In the full resolvosome a probable DNA-RuvA(4)-RuvB(12)-RuvC(2) complex forms which resolves the HJ.

Its subcellular location is the cytoplasm. The enzyme catalyses ATP + H2O = ADP + phosphate + H(+). Functionally, the RuvA-RuvB-RuvC complex processes Holliday junction (HJ) DNA during genetic recombination and DNA repair, while the RuvA-RuvB complex plays an important role in the rescue of blocked DNA replication forks via replication fork reversal (RFR). RuvA specifically binds to HJ cruciform DNA, conferring on it an open structure. The RuvB hexamer acts as an ATP-dependent pump, pulling dsDNA into and through the RuvAB complex. RuvB forms 2 homohexamers on either side of HJ DNA bound by 1 or 2 RuvA tetramers; 4 subunits per hexamer contact DNA at a time. Coordinated motions by a converter formed by DNA-disengaged RuvB subunits stimulates ATP hydrolysis and nucleotide exchange. Immobilization of the converter enables RuvB to convert the ATP-contained energy into a lever motion, pulling 2 nucleotides of DNA out of the RuvA tetramer per ATP hydrolyzed, thus driving DNA branch migration. The RuvB motors rotate together with the DNA substrate, which together with the progressing nucleotide cycle form the mechanistic basis for DNA recombination by continuous HJ branch migration. Branch migration allows RuvC to scan DNA until it finds its consensus sequence, where it cleaves and resolves cruciform DNA. This is Holliday junction branch migration complex subunit RuvB from Bacillus cereus (strain B4264).